We begin with the raw amino-acid sequence, 313 residues long: 4-diphosphocytidyl-2-C-methyl-D-erythritol kinase (313 aa).

Residue lysine 10 is part of the active site. Proline 95–serine 105 is an ATP binding site. The active site involves aspartate 136. The interval histidine 289–threonine 313 is disordered. Residues valine 292–arginine 304 are compositionally biased toward low complexity.

The protein belongs to the GHMP kinase family. IspE subfamily.

The enzyme catalyses 4-CDP-2-C-methyl-D-erythritol + ATP = 4-CDP-2-C-methyl-D-erythritol 2-phosphate + ADP + H(+). Its pathway is isoprenoid biosynthesis; isopentenyl diphosphate biosynthesis via DXP pathway; isopentenyl diphosphate from 1-deoxy-D-xylulose 5-phosphate: step 3/6. Its function is as follows. Catalyzes the phosphorylation of the position 2 hydroxy group of 4-diphosphocytidyl-2C-methyl-D-erythritol. This is 4-diphosphocytidyl-2-C-methyl-D-erythritol kinase from Anaeromyxobacter dehalogenans (strain 2CP-1 / ATCC BAA-258).